Reading from the N-terminus, the 356-residue chain is Protein pelota homolog (356 aa).

It belongs to the eukaryotic release factor 1 family. Pelota subfamily. As to quaternary structure, monomer. It depends on a divalent metal cation as a cofactor.

Its subcellular location is the cytoplasm. Functionally, may function in recognizing stalled ribosomes, interact with stem-loop structures in stalled mRNA molecules, and effect endonucleolytic cleavage of the mRNA. May play a role in the release non-functional ribosomes and degradation of damaged mRNAs. Has endoribonuclease activity. The protein is Protein pelota homolog of Pyrococcus furiosus (strain ATCC 43587 / DSM 3638 / JCM 8422 / Vc1).